A 152-amino-acid polypeptide reads, in one-letter code: Biogenesis of lysosome-related organelles complex 1 subunit 1 (152 aa).

The protein belongs to the BLOC1S1 family. In terms of assembly, component of the biogenesis of lysosome-related organelles complex-1 (BLOC-1). Interacts with BLOS2 and SNX1. Expressed in the whole plant (at protein level).

Its subcellular location is the cytoplasm. The protein resides in the endosome. In terms of biological role, component of the biogenesis of lysosome-related organelles complex-1 (BLOC-1), a complex that mediates the vacuolar degradative transport via the intracellular vesicle trafficking from the endosome to the vacuole. Probably regulates the PIN1 and PIN2 homeostasis through its interaction with SNX1. This Arabidopsis thaliana (Mouse-ear cress) protein is Biogenesis of lysosome-related organelles complex 1 subunit 1 (BLOS1).